Consider the following 299-residue polypeptide: NmrA-like family domain-containing protein 1 (299 aa).

Residues 11–16 (GGTGAQ), 37–41 (RNPRK), 58–59 (DQ), Gln62, 79–81 (TNY), Lys92, Lys133, and 155–158 (YFEN) contribute to the NADP(+) site. Positions 153–189 (PCYFENLLSHFLPQKAPDGKSYLLSLPTGDVPMDGMS) are interaction with ASS1.

It belongs to the NmrA-type oxidoreductase family. Homodimer. Interacts with ASS1. Interaction is enhanced by low NADPH/NADP(+) ratios, which results in inhibition of ASS1 activity.

It is found in the cytoplasm. The protein resides in the perinuclear region. It localises to the nucleus. In terms of biological role, redox sensor protein. Undergoes restructuring and subcellular redistribution in response to changes in intracellular NADPH/NADP(+) levels. At low NADPH concentrations the protein is found mainly as a monomer, and binds argininosuccinate synthase (ASS1), the enzyme involved in nitric oxide synthesis. Association with ASS1 impairs its activity and reduces the production of nitric oxide, which subsecuently prevents apoptosis. Under normal NADPH concentrations, the protein is found as a dimer and hides the binding site for ASS1. The homodimer binds one molecule of NADPH. Has higher affinity for NADPH than for NADP(+). Binding to NADPH is necessary to form a stable dimer. This chain is NmrA-like family domain-containing protein 1 (NMRAL1), found in Homo sapiens (Human).